Here is a 529-residue protein sequence, read N- to C-terminus: Phosphoenolpyruvate carboxykinase (ATP) (529 aa).

Arg60, Tyr195, and Lys201 together coordinate substrate. ATP-binding positions include Lys201, His220, and 236–244; that span reads GLSGTGKTT. The Mn(2+) site is built by Lys201 and His220. Position 257 (Asp257) interacts with Mn(2+). Glu285, Arg323, and Ser448 together coordinate ATP. Position 323 (Arg323) interacts with substrate.

This sequence belongs to the phosphoenolpyruvate carboxykinase (ATP) family. Mn(2+) serves as cofactor.

Its subcellular location is the cytoplasm. The catalysed reaction is oxaloacetate + ATP = phosphoenolpyruvate + ADP + CO2. The protein operates within carbohydrate biosynthesis; gluconeogenesis. Its function is as follows. Involved in the gluconeogenesis. Catalyzes the conversion of oxaloacetate (OAA) to phosphoenolpyruvate (PEP) through direct phosphoryl transfer between the nucleoside triphosphate and OAA. The polypeptide is Phosphoenolpyruvate carboxykinase (ATP) (Geobacter sp. (strain M21)).